Here is a 796-residue protein sequence, read N- to C-terminus: Probable phosphoketolase 2 (796 aa).

It belongs to the XFP family. Requires thiamine diphosphate as cofactor.

The sequence is that of Probable phosphoketolase 2 from Lactiplantibacillus plantarum (strain ATCC BAA-793 / NCIMB 8826 / WCFS1) (Lactobacillus plantarum).